The primary structure comprises 432 residues: NADH-quinone oxidoreductase subunit D (432 aa).

The protein belongs to the complex I 49 kDa subunit family. NDH-1 is composed of 14 different subunits. Subunits NuoB, C, D, E, F, and G constitute the peripheral sector of the complex.

The protein resides in the cell membrane. The catalysed reaction is a quinone + NADH + 5 H(+)(in) = a quinol + NAD(+) + 4 H(+)(out). Its function is as follows. NDH-1 shuttles electrons from NADH, via FMN and iron-sulfur (Fe-S) centers, to quinones in the respiratory chain. The immediate electron acceptor for the enzyme in this species is believed to be a menaquinone. Couples the redox reaction to proton translocation (for every two electrons transferred, four hydrogen ions are translocated across the cytoplasmic membrane), and thus conserves the redox energy in a proton gradient. The sequence is that of NADH-quinone oxidoreductase subunit D from Mycobacterium marinum (strain ATCC BAA-535 / M).